We begin with the raw amino-acid sequence, 702 residues long: Polyribonucleotide nucleotidyltransferase (702 aa).

Residues Asp-493 and Asp-499 each contribute to the Mg(2+) site. Positions 560 to 619 (PRLLTMRIDPERIRDVIGKGGATIRGLTEETGTNIDISDEGVVTIASADKAAAEEAKKRI) constitute a KH domain. The region spanning 629–697 (GKVYDGKVAK…RQGRIRLSMK (69 aa)) is the S1 motif domain.

This sequence belongs to the polyribonucleotide nucleotidyltransferase family. As to quaternary structure, component of the RNA degradosome, which is a multiprotein complex involved in RNA processing and mRNA degradation. Requires Mg(2+) as cofactor.

It is found in the cytoplasm. The enzyme catalyses RNA(n+1) + phosphate = RNA(n) + a ribonucleoside 5'-diphosphate. Involved in mRNA degradation. Catalyzes the phosphorolysis of single-stranded polyribonucleotides processively in the 3'- to 5'-direction. The polypeptide is Polyribonucleotide nucleotidyltransferase (Halorhodospira halophila (strain DSM 244 / SL1) (Ectothiorhodospira halophila (strain DSM 244 / SL1))).